Consider the following 353-residue polypeptide: Methylthioribose-1-phosphate isomerase (353 aa).

Substrate is bound by residues 48-50, arginine 94, and glutamine 201; that span reads RGA. Catalysis depends on aspartate 242, which acts as the Proton donor. A substrate-binding site is contributed by 252–253; that stretch reads NK.

Belongs to the eIF-2B alpha/beta/delta subunits family. MtnA subfamily.

The catalysed reaction is 5-(methylsulfanyl)-alpha-D-ribose 1-phosphate = 5-(methylsulfanyl)-D-ribulose 1-phosphate. The protein operates within amino-acid biosynthesis; L-methionine biosynthesis via salvage pathway; L-methionine from S-methyl-5-thio-alpha-D-ribose 1-phosphate: step 1/6. Functionally, catalyzes the interconversion of methylthioribose-1-phosphate (MTR-1-P) into methylthioribulose-1-phosphate (MTRu-1-P). In Roseiflexus sp. (strain RS-1), this protein is Methylthioribose-1-phosphate isomerase.